The following is a 559-amino-acid chain: Dihydroxy-acid dehydratase (559 aa).

Cys-49 lines the [2Fe-2S] cluster pocket. Residue Asp-81 participates in Mg(2+) binding. Residue Cys-122 participates in [2Fe-2S] cluster binding. Residues Asp-123 and Lys-124 each coordinate Mg(2+). An N6-carboxylysine modification is found at Lys-124. Cys-194 is a binding site for [2Fe-2S] cluster. A Mg(2+)-binding site is contributed by Glu-446. Ser-472 functions as the Proton acceptor in the catalytic mechanism.

This sequence belongs to the IlvD/Edd family. As to quaternary structure, homodimer. [2Fe-2S] cluster is required as a cofactor. It depends on Mg(2+) as a cofactor.

It catalyses the reaction (2R)-2,3-dihydroxy-3-methylbutanoate = 3-methyl-2-oxobutanoate + H2O. The catalysed reaction is (2R,3R)-2,3-dihydroxy-3-methylpentanoate = (S)-3-methyl-2-oxopentanoate + H2O. It participates in amino-acid biosynthesis; L-isoleucine biosynthesis; L-isoleucine from 2-oxobutanoate: step 3/4. Its pathway is amino-acid biosynthesis; L-valine biosynthesis; L-valine from pyruvate: step 3/4. Functions in the biosynthesis of branched-chain amino acids. Catalyzes the dehydration of (2R,3R)-2,3-dihydroxy-3-methylpentanoate (2,3-dihydroxy-3-methylvalerate) into 2-oxo-3-methylpentanoate (2-oxo-3-methylvalerate) and of (2R)-2,3-dihydroxy-3-methylbutanoate (2,3-dihydroxyisovalerate) into 2-oxo-3-methylbutanoate (2-oxoisovalerate), the penultimate precursor to L-isoleucine and L-valine, respectively. This is Dihydroxy-acid dehydratase from Prochlorococcus marinus subsp. pastoris (strain CCMP1986 / NIES-2087 / MED4).